The sequence spans 143 residues: Large ribosomal subunit protein uL11 (143 aa).

The protein belongs to the universal ribosomal protein uL11 family. As to quaternary structure, part of the ribosomal stalk of the 50S ribosomal subunit. Interacts with L10 and the large rRNA to form the base of the stalk. L10 forms an elongated spine to which L12 dimers bind in a sequential fashion forming a multimeric L10(L12)X complex. Post-translationally, one or more lysine residues are methylated.

Forms part of the ribosomal stalk which helps the ribosome interact with GTP-bound translation factors. In Pseudomonas entomophila (strain L48), this protein is Large ribosomal subunit protein uL11.